The following is a 313-amino-acid chain: E3 ubiquitin-protein ligase SINA-like 2 (313 aa).

The tract at residues 1 to 26 (MSGEASTSRRKRQRVPSSVESVENGG) is disordered. The segment at 44-80 (CPICCHALTSPIFQCDNGHIACSSCCTKLRNKCPSCA) adopts an RING-type zinc-finger fold. Residues 94–277 (VVEAVMVTCP…LKMEICIRKL (184 aa)) are SBD. Residues 97-155 (AVMVTCPNVKHGCTEKFSYGKELIHEKDCRFALCYCPAPNCNYSGVYKDLYSHFYVNHY) form an SIAH-type zinc finger. Residues Cys102, Cys109, His121, Cys125, Cys132, Cys137, His149, and His154 each coordinate Zn(2+). Residues 278–313 (KKDEEEADEDEESEEEEDDDDDDDDDDEEEDADEEE) form a disordered region. Over residues 282–313 (EEADEDEESEEEEDDDDDDDDDDEEEDADEEE) the composition is skewed to acidic residues.

Belongs to the SINA (Seven in absentia) family.

The enzyme catalyses S-ubiquitinyl-[E2 ubiquitin-conjugating enzyme]-L-cysteine + [acceptor protein]-L-lysine = [E2 ubiquitin-conjugating enzyme]-L-cysteine + N(6)-ubiquitinyl-[acceptor protein]-L-lysine.. Its pathway is protein modification; protein ubiquitination. E3 ubiquitin-protein ligase that mediates ubiquitination and subsequent proteasomal degradation of target proteins. E3 ubiquitin ligases accept ubiquitin from an E2 ubiquitin-conjugating enzyme in the form of a thioester and then directly transfers the ubiquitin to targeted substrates. It probably triggers the ubiquitin-mediated degradation of different substrates. The protein is E3 ubiquitin-protein ligase SINA-like 2 of Arabidopsis thaliana (Mouse-ear cress).